We begin with the raw amino-acid sequence, 304 residues long: Ribosomal RNA small subunit methyltransferase H (304 aa).

S-adenosyl-L-methionine-binding positions include 50–52, D69, F97, D113, and Q120; that span reads GGH.

It belongs to the methyltransferase superfamily. RsmH family.

It localises to the cytoplasm. The enzyme catalyses cytidine(1402) in 16S rRNA + S-adenosyl-L-methionine = N(4)-methylcytidine(1402) in 16S rRNA + S-adenosyl-L-homocysteine + H(+). Its function is as follows. Specifically methylates the N4 position of cytidine in position 1402 (C1402) of 16S rRNA. The polypeptide is Ribosomal RNA small subunit methyltransferase H (Rippkaea orientalis (strain PCC 8801 / RF-1) (Cyanothece sp. (strain PCC 8801))).